The sequence spans 70 residues: Brevinin-1S (70 aa).

An N-terminal signal peptide occupies residues M1–C22. A propeptide spanning residues E23–E44 is cleaved from the precursor. C64 and C70 are disulfide-bonded.

The protein belongs to the frog skin active peptide (FSAP) family. Brevinin subfamily. Expressed by the skin glands.

It is found in the secreted. Its function is as follows. Antimicrobial peptide. In Odorrana schmackeri (Schmacker's frog), this protein is Brevinin-1S.